We begin with the raw amino-acid sequence, 263 residues long: MPEGPEIRRAADKLEAAIKGEPLTDAWFAFPQLQPYQSLLIGQRVTHIATRGKALLTHFSGGLTLYSHNQLYGVWRVVDAGEQPASNRVLRVRLQTARKAILLYSASDIEMLTAEQVAHHPFLLRVGPDVLDMTLTVEEVKARLLSAKFRHRQFSGLLLDQAFLAGLGNYLRVEILWQVGLSGKRKAAELSDSQLDALAHALLAIPRLSYHTRGQADDNKHHGALFRFKVFHRDGERCERCGGVIEKTTLSSRPFYWCPGCQH.

P2 (schiff-base intermediate with DNA) is an active-site residue. The active-site Proton donor is E3. The active-site Proton donor; for beta-elimination activity is the K53. Residues Q70, R125, and N169 each contribute to the DNA site. The segment at 229–263 (KVFHRDGERCERCGGVIEKTTLSSRPFYWCPGCQH) adopts an FPG-type zinc-finger fold. R253 acts as the Proton donor; for delta-elimination activity in catalysis.

This sequence belongs to the FPG family. Zn(2+) is required as a cofactor.

The enzyme catalyses 2'-deoxyribonucleotide-(2'-deoxyribose 5'-phosphate)-2'-deoxyribonucleotide-DNA = a 3'-end 2'-deoxyribonucleotide-(2,3-dehydro-2,3-deoxyribose 5'-phosphate)-DNA + a 5'-end 5'-phospho-2'-deoxyribonucleoside-DNA + H(+). In terms of biological role, involved in base excision repair of DNA damaged by oxidation or by mutagenic agents. Acts as a DNA glycosylase that recognizes and removes damaged bases. Has a preference for oxidized pyrimidines, such as thymine glycol, 5,6-dihydrouracil and 5,6-dihydrothymine. Has AP (apurinic/apyrimidinic) lyase activity and introduces nicks in the DNA strand. Cleaves the DNA backbone by beta-delta elimination to generate a single-strand break at the site of the removed base with both 3'- and 5'-phosphates. The sequence is that of Endonuclease 8 from Klebsiella pneumoniae (strain 342).